A 460-amino-acid polypeptide reads, in one-letter code: Elongation factor 1-alpha (460 aa).

Position 2 is a n,N,N-trimethylglycine (Gly2). N6,N6-dimethyllysine; alternate is present on Lys3. Lys3 carries the N6-methyllysine; alternate modification. The tr-type G domain maps to 5 to 240 (KTHVNLVVIG…DAIEPPVRPS (236 aa)). Residues 14–21 (GHVDAGKS) form a G1 region. 14-21 (GHVDAGKS) serves as a coordination point for GTP. Lys30 is subject to N6-methyllysine. The interval 70 to 74 (GITID) is G2. Position 79 is an N6,N6,N6-trimethyllysine (Lys79). The tract at residues 91–94 (DAPG) is G3. GTP contacts are provided by residues 91–95 (DAPGH) and 153–156 (NKMD). Residues 153–156 (NKMD) form a G4 region. Positions 192–194 (SGW) are G5. Lys317 is modified (N6,N6-dimethyllysine; alternate). At Lys317 the chain carries N6-methyllysine; alternate. The residue at position 391 (Lys391) is an N6-methyllysine.

It belongs to the TRAFAC class translation factor GTPase superfamily. Classic translation factor GTPase family. EF-Tu/EF-1A subfamily.

It is found in the cytoplasm. In terms of biological role, this protein promotes the GTP-dependent binding of aminoacyl-tRNA to the A-site of ribosomes during protein biosynthesis. The sequence is that of Elongation factor 1-alpha (TEF) from Yarrowia lipolytica (strain CLIB 122 / E 150) (Yeast).